The primary structure comprises 285 residues: 2-dehydro-3-deoxyphosphooctonate aldolase (285 aa).

The protein belongs to the KdsA family.

The protein resides in the cytoplasm. It carries out the reaction D-arabinose 5-phosphate + phosphoenolpyruvate + H2O = 3-deoxy-alpha-D-manno-2-octulosonate-8-phosphate + phosphate. It participates in carbohydrate biosynthesis; 3-deoxy-D-manno-octulosonate biosynthesis; 3-deoxy-D-manno-octulosonate from D-ribulose 5-phosphate: step 2/3. It functions in the pathway bacterial outer membrane biogenesis; lipopolysaccharide biosynthesis. The sequence is that of 2-dehydro-3-deoxyphosphooctonate aldolase from Polaromonas sp. (strain JS666 / ATCC BAA-500).